Here is a 196-residue protein sequence, read N- to C-terminus: FMN-dependent NADH:quinone oxidoreductase (196 aa).

Position 10 (Ser10) interacts with FMN.

This sequence belongs to the azoreductase type 1 family. As to quaternary structure, homodimer. It depends on FMN as a cofactor.

It catalyses the reaction 2 a quinone + NADH + H(+) = 2 a 1,4-benzosemiquinone + NAD(+). The catalysed reaction is N,N-dimethyl-1,4-phenylenediamine + anthranilate + 2 NAD(+) = 2-(4-dimethylaminophenyl)diazenylbenzoate + 2 NADH + 2 H(+). In terms of biological role, quinone reductase that provides resistance to thiol-specific stress caused by electrophilic quinones. Its function is as follows. Also exhibits azoreductase activity. Catalyzes the reductive cleavage of the azo bond in aromatic azo compounds to the corresponding amines. This Cereibacter sphaeroides (strain ATCC 17023 / DSM 158 / JCM 6121 / CCUG 31486 / LMG 2827 / NBRC 12203 / NCIMB 8253 / ATH 2.4.1.) (Rhodobacter sphaeroides) protein is FMN-dependent NADH:quinone oxidoreductase.